Reading from the N-terminus, the 156-residue chain is MSRRNAAEKRPVLPDPQFNNRLATMMISRLMKHGKKSTAQRILAQAFGLINERTGGDPIELFETAVKNATPLVEVRARRVGGATYQVPMEVRQERGTAMALRWLVNFSRARNGRSMSQKLAAELMDAANEAGSAVRKREETHKMAEANKAFAHYRY.

The protein belongs to the universal ribosomal protein uS7 family. As to quaternary structure, part of the 30S ribosomal subunit. Contacts proteins S9 and S11.

One of the primary rRNA binding proteins, it binds directly to 16S rRNA where it nucleates assembly of the head domain of the 30S subunit. Is located at the subunit interface close to the decoding center, probably blocks exit of the E-site tRNA. The chain is Small ribosomal subunit protein uS7 from Prochlorococcus marinus (strain MIT 9303).